Reading from the N-terminus, the 311-residue chain is 4-hydroxy-3-methylbut-2-enyl diphosphate reductase (311 aa).

Cys12 lines the [4Fe-4S] cluster pocket. Positions 41 and 74 each coordinate (2E)-4-hydroxy-3-methylbut-2-enyl diphosphate. 2 residues coordinate dimethylallyl diphosphate: His41 and His74. Residues His41 and His74 each coordinate isopentenyl diphosphate. Residue Cys96 participates in [4Fe-4S] cluster binding. His124 contacts (2E)-4-hydroxy-3-methylbut-2-enyl diphosphate. His124 serves as a coordination point for dimethylallyl diphosphate. His124 serves as a coordination point for isopentenyl diphosphate. Residue Glu126 is the Proton donor of the active site. Thr167 provides a ligand contact to (2E)-4-hydroxy-3-methylbut-2-enyl diphosphate. Cys197 is a binding site for [4Fe-4S] cluster. Residues Ser225, Ser226, Asn227, and Ser269 each contribute to the (2E)-4-hydroxy-3-methylbut-2-enyl diphosphate site. Residues Ser225, Ser226, Asn227, and Ser269 each contribute to the dimethylallyl diphosphate site. Isopentenyl diphosphate contacts are provided by Ser225, Ser226, Asn227, and Ser269.

The protein belongs to the IspH family. Requires [4Fe-4S] cluster as cofactor.

The enzyme catalyses isopentenyl diphosphate + 2 oxidized [2Fe-2S]-[ferredoxin] + H2O = (2E)-4-hydroxy-3-methylbut-2-enyl diphosphate + 2 reduced [2Fe-2S]-[ferredoxin] + 2 H(+). It carries out the reaction dimethylallyl diphosphate + 2 oxidized [2Fe-2S]-[ferredoxin] + H2O = (2E)-4-hydroxy-3-methylbut-2-enyl diphosphate + 2 reduced [2Fe-2S]-[ferredoxin] + 2 H(+). It functions in the pathway isoprenoid biosynthesis; dimethylallyl diphosphate biosynthesis; dimethylallyl diphosphate from (2E)-4-hydroxy-3-methylbutenyl diphosphate: step 1/1. The protein operates within isoprenoid biosynthesis; isopentenyl diphosphate biosynthesis via DXP pathway; isopentenyl diphosphate from 1-deoxy-D-xylulose 5-phosphate: step 6/6. Its function is as follows. Catalyzes the conversion of 1-hydroxy-2-methyl-2-(E)-butenyl 4-diphosphate (HMBPP) into a mixture of isopentenyl diphosphate (IPP) and dimethylallyl diphosphate (DMAPP). Acts in the terminal step of the DOXP/MEP pathway for isoprenoid precursor biosynthesis. This Aeromonas hydrophila subsp. hydrophila (strain ATCC 7966 / DSM 30187 / BCRC 13018 / CCUG 14551 / JCM 1027 / KCTC 2358 / NCIMB 9240 / NCTC 8049) protein is 4-hydroxy-3-methylbut-2-enyl diphosphate reductase.